We begin with the raw amino-acid sequence, 119 residues long: Putative yippee-like protein Os10g0369500 (119 aa).

One can recognise a Yippee domain in the interval 21–118 (AVLKCRRCRV…LEKARMWKEA (98 aa)). Zn(2+) contacts are provided by Cys25, Cys28, Cys81, and Cys84.

Belongs to the yippee family.

This Oryza sativa subsp. japonica (Rice) protein is Putative yippee-like protein Os10g0369500.